A 774-amino-acid polypeptide reads, in one-letter code: Beta-xylosidase/alpha-L-arabinofuranosidase 2 (774 aa).

A signal peptide spans 1–33 (MASVENRTPNVSVFLCFFVLFATLLLSGGRVSS). Asn136 carries N-linked (GlcNAc...) asparagine glycosylation. Residue Asp303 is part of the active site. Asn437 carries an N-linked (GlcNAc...) asparagine glycan.

The protein belongs to the glycoside hydrolase 3 family.

Its subcellular location is the secreted. The protein resides in the extracellular space. The protein localises to the extracellular matrix. The enzyme catalyses Hydrolysis of (1-&gt;4)-beta-D-xylans, to remove successive D-xylose residues from the non-reducing termini.. It catalyses the reaction Hydrolysis of terminal non-reducing alpha-L-arabinofuranoside residues in alpha-L-arabinosides.. In terms of biological role, a bifunctional beta-xylosidase/alpha-L-arabinosidase, exo-enzyme that acts synergistically with endohydrolases. Releases xylose and arabinose from cell walls. The protein is Beta-xylosidase/alpha-L-arabinofuranosidase 2 of Medicago sativa subsp. varia (Alfalfa).